The primary structure comprises 151 residues: Metallothiol transferase FosB (151 aa).

One can recognise a VOC domain in the interval 4-119; it reads SINHVTYSVS…DGHKFELHTG (116 aa). Residues histidine 7, histidine 66, and glutamate 115 each contribute to the Mg(2+) site. The Proton donor/acceptor role is filled by glutamate 115.

This sequence belongs to the fosfomycin resistance protein family. FosB subfamily. In terms of assembly, homodimer. Requires Mg(2+) as cofactor.

The protein resides in the cytoplasm. In terms of biological role, metallothiol transferase which confers resistance to fosfomycin by catalyzing the addition of a thiol cofactor to fosfomycin. L-cysteine is probably the physiological thiol donor. The polypeptide is Metallothiol transferase FosB (Staphylococcus saprophyticus subsp. saprophyticus (strain ATCC 15305 / DSM 20229 / NCIMB 8711 / NCTC 7292 / S-41)).